A 775-amino-acid polypeptide reads, in one-letter code: Endothelin-converting enzyme-like 1 (775 aa).

The Cytoplasmic segment spans residues M1–E59. The chain crosses the membrane as a helical; Signal-anchor for type II membrane protein span at residues V60–L82. Over K83–W775 the chain is Lumenal. Residues G98–W775 enclose the Peptidase M13 domain. Cystine bridges form between C123/C760, C131/C720, C187/C441, and C649/C772. N255 and N322 each carry an N-linked (GlcNAc...) asparagine glycan. H612 is a binding site for Zn(2+). Residue E613 is part of the active site. Residue H616 coordinates Zn(2+). A glycan (N-linked (GlcNAc...) asparagine) is linked at N656. E672 is a Zn(2+) binding site. The Proton donor role is filled by D676.

This sequence belongs to the peptidase M13 family. Zn(2+) is required as a cofactor. Post-translationally, N-glycosylated. Highly expressed in the CNS, in particular in putamen, spinal cord, medulla and subthalamic nucleus. A strong signal was also detected in uterine subepithelial cells and around renal blood vessels. Detected at lower levels in amygdala, caudate, thalamus, pancreas and skeletal muscle. Detected at very low levels in substantia nigra, cerebellum, cortex, corpus callosum and hippocampus.

It localises to the membrane. May contribute to the degradation of peptide hormones and be involved in the inactivation of neuronal peptides. This Homo sapiens (Human) protein is Endothelin-converting enzyme-like 1 (ECEL1).